We begin with the raw amino-acid sequence, 290 residues long: MPNIKEIVSRINSVHSTQQITKAMKMVAAAKLTKAQHQLLQLRPYAGGLSDILNHVIYSTEAELTKHYTQKRTIQRLMLVVISSDKGLCGSFNANIIKNTEAYINQFKDLLPTQIDILVIGKKALNFFQKKDYNLITTYTDLAGQLQFEDISEVASFIMDAFLNYTYDRVELIYNLFGSAASQFVQLEPFLPIVHPASPSHNNHVDYIYEPSKASLVETLIPMTLKIQLYKALLESAASEHGARMTTMSKATDNAEELLKSLRITYNKTRQAAITNEILEIAAGAEALSQ.

It belongs to the ATPase gamma chain family. In terms of assembly, F-type ATPases have 2 components, CF(1) - the catalytic core - and CF(0) - the membrane proton channel. CF(1) has five subunits: alpha(3), beta(3), gamma(1), delta(1), epsilon(1). CF(0) has three main subunits: a, b and c.

The protein localises to the cell inner membrane. Its function is as follows. Produces ATP from ADP in the presence of a proton gradient across the membrane. The gamma chain is believed to be important in regulating ATPase activity and the flow of protons through the CF(0) complex. The protein is ATP synthase gamma chain of Amoebophilus asiaticus (strain 5a2).